Consider the following 196-residue polypeptide: Glycerol-3-phosphate acyltransferase (196 aa).

A run of 5 helical transmembrane segments spans residues 1-21 (MIIF…SISG), 55-75 (IAIF…WLGT), 81-101 (PIYL…PIYF), 118-138 (AISI…VYLF), and 140-160 (YASL…WYIQ).

The protein belongs to the PlsY family. In terms of assembly, probably interacts with PlsX.

The protein localises to the cell inner membrane. It carries out the reaction an acyl phosphate + sn-glycerol 3-phosphate = a 1-acyl-sn-glycero-3-phosphate + phosphate. Its pathway is lipid metabolism; phospholipid metabolism. Catalyzes the transfer of an acyl group from acyl-phosphate (acyl-PO(4)) to glycerol-3-phosphate (G3P) to form lysophosphatidic acid (LPA). This enzyme utilizes acyl-phosphate as fatty acyl donor, but not acyl-CoA or acyl-ACP. The protein is Glycerol-3-phosphate acyltransferase of Blochmanniella floridana.